Here is a 316-residue protein sequence, read N- to C-terminus: Probable 5-dehydro-4-deoxyglucarate dehydratase (316 aa).

The protein belongs to the DapA family.

The catalysed reaction is 5-dehydro-4-deoxy-D-glucarate + H(+) = 2,5-dioxopentanoate + CO2 + H2O. It functions in the pathway carbohydrate acid metabolism; D-glucarate degradation; 2,5-dioxopentanoate from D-glucarate: step 2/2. This chain is Probable 5-dehydro-4-deoxyglucarate dehydratase, found in Corynebacterium glutamicum (strain ATCC 13032 / DSM 20300 / JCM 1318 / BCRC 11384 / CCUG 27702 / LMG 3730 / NBRC 12168 / NCIMB 10025 / NRRL B-2784 / 534).